Reading from the N-terminus, the 304-residue chain is N-acetyl-D-glucosamine kinase (304 aa).

ATP-binding positions include 4–11 (GFDMGGTK) and 133–140 (GLGGGLVI). Zn(2+)-binding residues include His-157, Cys-177, Cys-179, and Cys-184.

It belongs to the ROK (NagC/XylR) family. NagK subfamily.

The catalysed reaction is N-acetyl-D-glucosamine + ATP = N-acetyl-D-glucosamine 6-phosphate + ADP + H(+). It participates in cell wall biogenesis; peptidoglycan recycling. In terms of biological role, catalyzes the phosphorylation of N-acetyl-D-glucosamine (GlcNAc) derived from cell-wall degradation, yielding GlcNAc-6-P. The polypeptide is N-acetyl-D-glucosamine kinase (Pectobacterium atrosepticum (strain SCRI 1043 / ATCC BAA-672) (Erwinia carotovora subsp. atroseptica)).